We begin with the raw amino-acid sequence, 810 residues long: Actin-regulating kinase PRK1 (810 aa).

The Protein kinase domain maps to 22-298 (AKIIKYLTSG…CQVLEEVSRL (277 aa)). Residues 28 to 36 (LTSGGFAQV) and K56 contribute to the ATP site. The Proton acceptor role is filled by D158. 3 positions are modified to phosphoserine: S402, S428, and S484. Disordered regions lie at residues 552–668 (FTGN…NVNI) and 733–761 (GVLD…HLRT). Phosphothreonine is present on T553. The segment covering 553–566 (TGNSVNNSRSASFD) has biased composition (polar residues). Residue S556 is modified to Phosphoserine. Residues 567-588 (NNNVNGNGNNTNRRLVSSSTSS) show a composition bias toward low complexity. 2 stretches are compositionally biased toward basic and acidic residues: residues 594–612 (SDTK…EKRR) and 622–639 (FDQH…DYYR). The span at 645–658 (KKTQASAKTTSKPT) shows a compositional bias: low complexity. Basic and acidic residues predominate over residues 733-748 (GVLDIKTKSNGKDKSR). An interaction with SH3 domain of ABP1 region spans residues 743 to 756 (GKDKSRPPRPPPKP).

Belongs to the protein kinase superfamily. Ser/Thr protein kinase family. As to quaternary structure, interacts with ABP1, which is required for proper actin patch localization.

The protein localises to the cytoplasm. The protein resides in the cytoskeleton. Its subcellular location is the actin patch. The enzyme catalyses L-seryl-[protein] + ATP = O-phospho-L-seryl-[protein] + ADP + H(+). The catalysed reaction is L-threonyl-[protein] + ATP = O-phospho-L-threonyl-[protein] + ADP + H(+). Its function is as follows. Protein kinase involved in the regulation of actin cytoskeleton organization and endocytosis. Phosphorylates PAN1 which disrupts the interaction between PAN1 and END3, and between PAN1 and SLA1. Phosphorylates SCD5. Preferentially, phosphorylates substrates on threonine residues in a [L/I/V/M]-x-x-[Q/N/T/S]-x-T-G motif. In Saccharomyces cerevisiae (strain ATCC 204508 / S288c) (Baker's yeast), this protein is Actin-regulating kinase PRK1 (PRK1).